The following is a 479-amino-acid chain: Pyruvate kinase (479 aa).

Arginine 36 contacts substrate. Residues asparagine 38, serine 40, and aspartate 70 each contribute to the K(+) site. 38–41 (NFSH) contacts ATP. Residues arginine 77 and lysine 160 each contribute to the ATP site. Glutamate 225 contacts Mg(2+). Substrate-binding residues include glycine 251, aspartate 252, and threonine 284. Residue aspartate 252 participates in Mg(2+) binding.

This sequence belongs to the pyruvate kinase family. As to quaternary structure, homotetramer. Mg(2+) serves as cofactor. The cofactor is K(+).

The catalysed reaction is pyruvate + ATP = phosphoenolpyruvate + ADP + H(+). The protein operates within carbohydrate degradation; glycolysis; pyruvate from D-glyceraldehyde 3-phosphate: step 5/5. Allosterically activated by AMP and by several sugar phosphates. Belongs to type II PK. The sequence is that of Pyruvate kinase (pykA) from Buchnera aphidicola subsp. Baizongia pistaciae (strain Bp).